Reading from the N-terminus, the 512-residue chain is Acid-sensing ion channel 2 (512 aa).

Residues 1-37 are Cytoplasmic-facing; the sequence is MDLKESPSEGSLQPSSIQIFANTSTLHGIRHIFVYGP. Residues S8 and S11 each carry the phosphoserine modification. A helical transmembrane segment spans residues 38 to 58; it reads LTIRRVLWAVAFVGSLGLLLV. Residues 59–427 lie on the Extracellular side of the membrane; that stretch reads ESSERVSYYF…EQKKAYEVAA (369 aa). Disulfide bonds link C92–C193, C289–C364, C307–C360, C311–C358, C320–C342, and C322–C334. N-linked (GlcNAc...) asparagine glycosylation is found at N365 and N392. Residues 428–448 form a helical membrane-spanning segment; that stretch reads LLGDIGGQMGLFIGASLLTIL. A GAS motif; ion selectivity filter motif is present at residues 441–443; sequence GAS. Residues 449-512 are Cytoplasmic-facing; that stretch reads ELFDYIYELI…ALGTLEEIAC (64 aa).

It belongs to the amiloride-sensitive sodium channel (TC 1.A.6) family. ASIC2 subfamily. As to quaternary structure, can form homotrimers. Heterotrimer; forms functional heterotrimers producing channel with different properties. Forms heterotrimers with ASIC1; while ASIC1 determines current amplitude, ASIC2 influences the properties of the current. Forms heterotrimers with ASIC3; resulting in channels with distinct properties. Interacts with STOM; STOM regulates the gating of ASIC2-containing channels. Interacts with PICK1; promotes ASIC3 phosphorylation by PKC and activation of ASIC2/ASIC3 heterotrimers. As to expression, expressed in sciatic nerve and dorsal root ganglion (DRG) (at protein level). Both isoforms display the same expression pattern except in DRG where isoform 2 is more abundantly expressed. Widely distributed throughout the brain. Highly expressed in the main olfactory bulb, neo- and allo-cortical regions, hippocampal formation, habenula, basolateral amygdaloid nuclei, and cerebellum. In the olfactory system, expressed in the glomerular cell layer, the internal granular layer, and the mitral and internal plexiform cell layers. Within the glomerular layer, restricted to the periglomerular cells. In the neocortex, strongly expressed in the large pyramidal neurons in all cortical layers as well as in the oligo-, astro-, or micro-glia cells. In the hippocampal formation, expressed in dentate granule cells and hilar neurons, as well as in pyramidal cells of CA1-CA3 subfields. Expressed in stratum oriens and radiatum of all subfields. Within the thalamus, expressed moderately in the medial and lateral habenula. In the cerebellar cortex expressed in Purkinje cells and granule cells. Expressed at low levels in choroid plexus.

The protein localises to the cell membrane. It catalyses the reaction Na(+)(in) = Na(+)(out). It carries out the reaction K(+)(in) = K(+)(out). The enzyme catalyses Li(+)(in) = Li(+)(out). Its activity is regulated as follows. Inhibited by the diuretic drug amiloride. Inhibited by gadolinium ions, the heterotrimer with ASIC3 being more sensitive. Zn(2+) potentiates the acid activation of ASIC2-containing homomeric and heteromeric channels. The snake venom mambalgin-1 and mambalgin-2 inhibit the homotrimers composed of ASIC1 and ASIC2 and have strong analgesic effects. Forms pH-gated trimeric sodium channels that act as postsynaptic excitatory sensors in the nervous system. Upon extracellular acidification, these channels generate rapid, transient inward currents that fully desensitize. Highly selective for sodium, they are permeable to other cations. By forming heterotrimeric channels with ASIC1, could contribute to synaptic plasticity, learning, and memory. Additionally, as acid sensors at nerve terminals, plays a role in mechanosensation and phototransduction. Functionally, has no pH-gated sodium channel activity per se but can associate with other ASICs to produce functional channels with specific properties. The sequence is that of Acid-sensing ion channel 2 from Rattus norvegicus (Rat).